The sequence spans 529 residues: Na(+)/H(+) antiporter NhaB (529 aa).

Helical transmembrane passes span 13 to 33 (FLGKAPDWYKVAIISFLIINP), 34 to 54 (IVFFFVDPFVAGWLLVVEFIF), 90 to 110 (LVANIEVLLLLVFMVAGIYFM), 113 to 133 (LLLFIFTKILLGIRSKAILSL), 149 to 166 (LTVIAVVISVAVGFYSIY), 205 to 225 (LLMHAGVGTALGGVTTMVGEP), 241 to 261 (FLIRMAPVTLPVFVCGLLTCF), 306 to 326 (GLIAVWLIVGLALHLAAVGLI), 327 to 347 (GLSVIILATAFTGVIEEHSLG), 351 to 371 (EEALPFTALLAVFFSIVAVII), 451 to 471 (ATPNGQAAFLFLLTSALAPLI), and 479 to 499 (VIMALPYTIVLALVGLFGIVF).

The protein belongs to the NhaB Na(+)/H(+) (TC 2.A.34) antiporter family.

The protein localises to the cell inner membrane. It catalyses the reaction 2 Na(+)(in) + 3 H(+)(out) = 2 Na(+)(out) + 3 H(+)(in). Na(+)/H(+) antiporter that extrudes sodium in exchange for external protons. This is Na(+)/H(+) antiporter NhaB from Vibrio vulnificus (strain YJ016).